Here is a 78-residue protein sequence, read N- to C-terminus: Acyl carrier protein (78 aa).

The Carrier domain maps to Asp-2 to Val-77. At Ser-37 the chain carries O-(pantetheine 4'-phosphoryl)serine.

The protein belongs to the acyl carrier protein (ACP) family. Post-translationally, 4'-phosphopantetheine is transferred from CoA to a specific serine of apo-ACP by AcpS. This modification is essential for activity because fatty acids are bound in thioester linkage to the sulfhydryl of the prosthetic group.

The protein resides in the cytoplasm. It functions in the pathway lipid metabolism; fatty acid biosynthesis. Functionally, carrier of the growing fatty acid chain in fatty acid biosynthesis. This is Acyl carrier protein from Treponema pallidum (strain Nichols).